The sequence spans 509 residues: Maturase K (509 aa).

It belongs to the intron maturase 2 family. MatK subfamily.

It localises to the plastid. Its subcellular location is the chloroplast. Functionally, usually encoded in the trnK tRNA gene intron. Probably assists in splicing its own and other chloroplast group II introns. This is Maturase K from Portulaca oleracea (Common purslane).